A 367-amino-acid polypeptide reads, in one-letter code: Histidinol-phosphate aminotransferase 1 (367 aa).

N6-(pyridoxal phosphate)lysine is present on lysine 226.

The protein belongs to the class-II pyridoxal-phosphate-dependent aminotransferase family. Histidinol-phosphate aminotransferase subfamily. Homodimer. Requires pyridoxal 5'-phosphate as cofactor.

The catalysed reaction is L-histidinol phosphate + 2-oxoglutarate = 3-(imidazol-4-yl)-2-oxopropyl phosphate + L-glutamate. Its pathway is amino-acid biosynthesis; L-histidine biosynthesis; L-histidine from 5-phospho-alpha-D-ribose 1-diphosphate: step 7/9. The polypeptide is Histidinol-phosphate aminotransferase 1 (hisC1) (Haemophilus influenzae (strain ATCC 51907 / DSM 11121 / KW20 / Rd)).